The primary structure comprises 282 residues: Bifunctional protein FolD (282 aa).

Residues 164–166 (GAS), isoleucine 189, and isoleucine 230 each bind NADP(+).

The protein belongs to the tetrahydrofolate dehydrogenase/cyclohydrolase family. As to quaternary structure, homodimer.

It catalyses the reaction (6R)-5,10-methylene-5,6,7,8-tetrahydrofolate + NADP(+) = (6R)-5,10-methenyltetrahydrofolate + NADPH. It carries out the reaction (6R)-5,10-methenyltetrahydrofolate + H2O = (6R)-10-formyltetrahydrofolate + H(+). It functions in the pathway one-carbon metabolism; tetrahydrofolate interconversion. In terms of biological role, catalyzes the oxidation of 5,10-methylenetetrahydrofolate to 5,10-methenyltetrahydrofolate and then the hydrolysis of 5,10-methenyltetrahydrofolate to 10-formyltetrahydrofolate. The sequence is that of Bifunctional protein FolD from Campylobacter jejuni subsp. jejuni serotype O:2 (strain ATCC 700819 / NCTC 11168).